A 201-amino-acid polypeptide reads, in one-letter code: Regulator of G-protein signaling 1 (201 aa).

The RGS domain maps to 75–191 (SLEKLLISED…LKSEIFLRLA (117 aa)).

It is found in the cell membrane. The protein localises to the cytoplasm. The protein resides in the cytosol. Regulates G protein-coupled receptor signaling cascades, including signaling downstream of the N-formylpeptide chemoattractant receptors and leukotriene receptors. Inhibits B cell chemotaxis. Inhibits signal transduction by increasing the GTPase activity of G protein alpha subunits, thereby driving them into their inactive GDP-bound form. The sequence is that of Regulator of G-protein signaling 1 (rgs1) from Xenopus tropicalis (Western clawed frog).